The primary structure comprises 828 residues: Class I hydrophobin hum3 (828 aa).

Residues 1-22 (MKYLQFLAAVAAVSAFSGPVLA) form the signal peptide. N-linked (GlcNAc...) asparagine glycosylation is found at asparagine 156, asparagine 222, and asparagine 738. 4 disulfides stabilise this stretch: cysteine 750–cysteine 808, cysteine 757–cysteine 802, cysteine 758–cysteine 788, and cysteine 809–cysteine 822. Asparagine 811 carries an N-linked (GlcNAc...) asparagine glycan.

This sequence in the C-terminal section; belongs to the fungal hydrophobin family. As to quaternary structure, self-assembles to form functional amyloid fibrils called rodlets. Self-assembly into fibrillar rodlets occurs spontaneously at hydrophobic:hydrophilic interfaces and the rodlets further associate laterally to form amphipathic monolayers. Hum3 is an atypical hydrophobin that consists in a repetitive repellent-like region that spans 578 aa which is separated from a hydrophobin-like domain by a spacer region containing three possible kex2 processing sites. The repetitive region contains 17 amphipathic repeats of 31-36 aa each of them with a C-terminal putative kex2 processing motif.

The protein localises to the secreted. It localises to the cell wall. Its function is as follows. Aerial growth, conidiation, and dispersal of filamentous fungi in the environment rely upon a capability of their secreting small amphipathic proteins called hydrophobins (HPBs) with low sequence identity. Class I can self-assemble into an outermost layer of rodlet bundles on aerial cell surfaces, conferring cellular hydrophobicity that supports fungal growth, development and dispersal; whereas Class II form highly ordered films at water-air interfaces through intermolecular interactions but contribute nothing to the rodlet structure. Atypical class I hydrophobin that is preceded by a signal sequence and 17 imperfect repeats. The repeated peptides might function as repellents whereas the class I hydrophobin seems not to be crucial for the formation of aerial hyphae. Hydrophobins of Mycosarcoma maydis have been functionally replaced, at least partially, by repellents. Hum3 and rsp1 together are pathogenicity proteins that share an essential function in early stages of the infection. The chain is Class I hydrophobin hum3 from Mycosarcoma maydis (Corn smut fungus).